A 138-amino-acid chain; its full sequence is Actin-related protein 2/3 complex subunit 5 (138 aa).

Positions 1 to 21 (MNYEDDNVESGQAGKSDAEYK) are disordered.

This sequence belongs to the ARPC5 family. In terms of assembly, component of the Arp2/3 complex composed of arpB/Arp2, arpC/Arp3, arcA/p41-arc, arcB/p34-arc, arcC/p21-arc, arcD/p20-arc and arcE/p16-arc. Interacts with carmil (via the region between the LRR domain and COOH-terminal proline-rich domain); carmil is required for Arp2/3-dependent actin nucleation. Arp2/3 complex, MyoB, MyoC, and the alpha and beta subunits of capping protein all form a larger complex with carmil.

Its subcellular location is the cytoplasm. The protein resides in the cytoskeleton. The protein localises to the cytosol. It localises to the cell cortex. It is found in the cell projection. Its subcellular location is the pseudopodium. In terms of biological role, functions as a component of the Arp2/3 complex which is involved in regulation of actin polymerization and together with an activating nucleation-promoting factor (NPF) mediates the formation of branched actin networks. Seems to contact the pointed end of the daughter actin filament. The Arp2/3 complex is involved in organizing the actin system in cell motility and chemotaxis, in phagocytosis and macropinocytosis, at late steps of endosome processing, and in mitosis. In concert with a group of other proteins, the Arp2/3 complex plays a general role in the rapid activation and adaptation of the actin system to its multiple functions. This Dictyostelium discoideum (Social amoeba) protein is Actin-related protein 2/3 complex subunit 5 (arcE).